Here is a 526-residue protein sequence, read N- to C-terminus: Cytochrome P450 4F5 (526 aa).

Cys470 serves as a coordination point for heme.

The protein belongs to the cytochrome P450 family. Requires heme as cofactor. High expression in liver and kidney. Lower expression in brain.

It is found in the endoplasmic reticulum membrane. The protein resides in the microsome membrane. It catalyses the reaction an organic molecule + reduced [NADPH--hemoprotein reductase] + O2 = an alcohol + oxidized [NADPH--hemoprotein reductase] + H2O + H(+). The chain is Cytochrome P450 4F5 (Cyp4f5) from Rattus norvegicus (Rat).